A 164-amino-acid polypeptide reads, in one-letter code: HTH-type transcriptional regulator IscR (164 aa).

The 130-residue stretch at arginine 2 to asparagine 131 folds into the HTH rrf2-type domain. Positions leucine 28 to lysine 51 form a DNA-binding region, H-T-H motif. [2Fe-2S] cluster is bound by residues cysteine 92, cysteine 98, and cysteine 104. Residues cysteine 92, cysteine 98, and cysteine 104 each contribute to the a metal cation site. The segment at aspartate 145–alanine 164 is disordered. Positions glycine 152–alanine 164 are enriched in polar residues.

Requires [2Fe-2S] cluster as cofactor.

Its function is as follows. Regulates the transcription of several operons and genes involved in the biogenesis of Fe-S clusters and Fe-S-containing proteins. This is HTH-type transcriptional regulator IscR from Serratia proteamaculans (strain 568).